The chain runs to 328 residues: Palmitoyltransferase ZDHHC15A (328 aa).

Topologically, residues 1–14 (MLLPACLRRCARLL) are cytoplasmic. The helical transmembrane segment at 15-35 (FWIPVLVVIVVVMWSYYAYVV) threads the bilayer. Residues 36-48 (HFCWILLSSATQR) lie on the Lumenal side of the membrane. A helical membrane pass occupies residues 49–69 (VVFLCLFHLCFGMFSWSFWKA). Topologically, residues 70–166 (VSTPPSSPSV…NNCMGFSNYK (97 aa)) are cytoplasmic. One can recognise a DHHC domain in the interval 123–173 (RFCHHCQLIKPDRCHHCSVCQTCVLKMDHHCLWLNNCMGFSNYKFFMLFLL). Zn(2+) contacts are provided by Cys-125 and Cys-128. Residue Lys-132 coordinates substrate. Zn(2+) contacts are provided by His-138, Cys-139, Cys-142, Cys-145, and His-152. Cys-153 acts as the S-palmitoyl cysteine intermediate in catalysis. Cys-159 contributes to the Zn(2+) binding site. Residues 167–187 (FFMLFLLYSLLYCLLIVSTVT) form a helical membrane-spanning segment. Over 188–206 (PTVIQLWRGRLFDSCVKLH) the chain is Lumenal. A helical transmembrane segment spans residues 207–227 (VLFLTLVSAIFAITLCFLLIF). The Cytoplasmic segment spans residues 228-328 (HIWLLTSNKT…KEAAVTIAVD (101 aa)).

It belongs to the DHHC palmitoyltransferase family. In terms of processing, autopalmitoylated (in vitro).

The protein localises to the golgi apparatus membrane. It is found in the postsynaptic density. It carries out the reaction L-cysteinyl-[protein] + hexadecanoyl-CoA = S-hexadecanoyl-L-cysteinyl-[protein] + CoA. The catalysed reaction is L-cysteinyl-[protein] + tetradecanoyl-CoA = S-tetradecanoyl-L-cysteinyl-[protein] + CoA. The enzyme catalyses L-cysteinyl-[protein] + octadecanoyl-CoA = S-octadecanoyl-L-cysteinyl-[protein] + CoA. Palmitoyltransferase that catalyzes the addition of palmitate onto various protein substrates. Has no stringent fatty acid selectivity and in addition to palmitate can also transfer onto target proteins myristate from tetradecanoyl-CoA and stearate from octadecanoyl-CoA. May thereby regulate target proteins association and localization to membranes. This chain is Palmitoyltransferase ZDHHC15A (zdhhc15a), found in Danio rerio (Zebrafish).